We begin with the raw amino-acid sequence, 284 residues long: Nucleotide-binding protein PP_0949 (284 aa).

8–15 (GRSGSGKS) lines the ATP pocket. Residue 60–63 (DARN) participates in GTP binding.

The protein belongs to the RapZ-like family.

In terms of biological role, displays ATPase and GTPase activities. This chain is Nucleotide-binding protein PP_0949, found in Pseudomonas putida (strain ATCC 47054 / DSM 6125 / CFBP 8728 / NCIMB 11950 / KT2440).